Consider the following 82-residue polypeptide: Small ribosomal subunit protein bS16 (82 aa).

Belongs to the bacterial ribosomal protein bS16 family.

This is Small ribosomal subunit protein bS16 from Yersinia enterocolitica serotype O:8 / biotype 1B (strain NCTC 13174 / 8081).